Reading from the N-terminus, the 572-residue chain is Protein 5NUC (572 aa).

A signal peptide spans 1–25 (MLFFLNFFVLVFSIELALLTASAAA). Aspartate 39 and histidine 41 together coordinate Zn(2+). A disulfide bond links cysteine 54 and cysteine 64. N-linked (GlcNAc...) asparagine glycosylation is present at asparagine 82. Zn(2+)-binding residues include aspartate 93, asparagine 125, histidine 227, and histidine 250. A disulfide bridge connects residues cysteine 360 and cysteine 365. 4 residues coordinate substrate: arginine 361, glutamine 399, arginine 404, and phenylalanine 427. N-linked (GlcNAc...) asparagine glycans are attached at residues asparagine 454 and asparagine 490. The cysteines at positions 488 and 491 are disulfide-linked. 512–518 (FMKDGGD) contacts substrate.

The protein belongs to the 5'-nucleotidase family. It depends on Zn(2+) as a cofactor.

The enzyme catalyses UDP-sugar + H2O = UMP + alpha-D-aldose 1-phosphate.. It carries out the reaction a ribonucleoside 5'-phosphate + H2O = a ribonucleoside + phosphate. Degradation of external UDP-glucose to uridine monophosphate and glucose-1-phosphate, which can then be used by the cell. This chain is Protein 5NUC (5NUC), found in Lutzomyia longipalpis (Sand fly).